A 466-amino-acid chain; its full sequence is Phosphomethylpyrimidine synthase (466 aa).

Substrate is bound by residues Asn-80, Met-109, Tyr-139, His-175, 195–197, 236–239, and Glu-275; these read SRG and DSLR. His-279 contributes to the Zn(2+) binding site. Tyr-302 provides a ligand contact to substrate. His-343 contacts Zn(2+). [4Fe-4S] cluster is bound by residues Cys-423, Cys-426, and Cys-431.

It belongs to the ThiC family. [4Fe-4S] cluster serves as cofactor.

The enzyme catalyses 5-amino-1-(5-phospho-beta-D-ribosyl)imidazole + S-adenosyl-L-methionine = 4-amino-2-methyl-5-(phosphooxymethyl)pyrimidine + CO + 5'-deoxyadenosine + formate + L-methionine + 3 H(+). It functions in the pathway cofactor biosynthesis; thiamine diphosphate biosynthesis. In terms of biological role, catalyzes the synthesis of the hydroxymethylpyrimidine phosphate (HMP-P) moiety of thiamine from aminoimidazole ribotide (AIR) in a radical S-adenosyl-L-methionine (SAM)-dependent reaction. The protein is Phosphomethylpyrimidine synthase of Synechococcus sp. (strain RCC307).